The primary structure comprises 238 residues: Probable transglycosylase SceD 3 (238 aa).

The signal sequence occupies residues 1 to 27 (MKKTVVASTLAVGLGVTGFAAGNSADA). The disordered stretch occupies residues 82–161 (YGQGSTNAPA…SEASEGSSVN (80 aa)). Residues 89–156 (APAQETAEQP…NESSSSEASE (68 aa)) are compositionally biased toward low complexity.

Belongs to the transglycosylase family. SceD subfamily.

It localises to the secreted. Its function is as follows. Is able to cleave peptidoglycan and affects clumping and separation of bacterial cells. The protein is Probable transglycosylase SceD 3 (sceD3) of Staphylococcus saprophyticus subsp. saprophyticus (strain ATCC 15305 / DSM 20229 / NCIMB 8711 / NCTC 7292 / S-41).